Reading from the N-terminus, the 151-residue chain is Methylglyoxal synthase (151 aa).

The MGS-like domain occupies 6–151; sequence RTMPAHKHVA…DYDAYLAERT (146 aa). Substrate is bound by residues His19, Lys23, 45–48, and 65–66; these read TGTT and SG. Asp71 functions as the Proton donor/acceptor in the catalytic mechanism. Residue His98 coordinates substrate.

The protein belongs to the methylglyoxal synthase family.

It carries out the reaction dihydroxyacetone phosphate = methylglyoxal + phosphate. In terms of biological role, catalyzes the formation of methylglyoxal from dihydroxyacetone phosphate. The protein is Methylglyoxal synthase of Vibrio campbellii (strain ATCC BAA-1116).